The primary structure comprises 398 residues: uncharacterized protein (398 aa).

Residues 235 to 351 form the CobW C-terminal domain; the sequence is VAIVEFSARR…DIVNALNAAL (117 aa).

This is an uncharacterized protein from Mycobacterium bovis (strain ATCC BAA-935 / AF2122/97).